The sequence spans 442 residues: 26S proteasome non-ATPase regulatory subunit 12 homolog A (442 aa).

Residues 6–137 (KLEATIDRLL…EAADLMQEVA (132 aa)) adopt a coiled-coil conformation. The PCI domain maps to 232 to 403 (EICRSYKAIY…GIVCFQIAKD (172 aa)).

Belongs to the proteasome subunit p55 family. In terms of assembly, component of the 19S regulatory particle (RP/PA700) lid subcomplex of the 26S proteasome. The 26S proteasome is composed of a core protease (CP), known as the 20S proteasome, capped at one or both ends by the 19S regulatory particle (RP/PA700). The RP/PA700 complex is composed of at least 17 different subunits in two subcomplexes, the base and the lid, which form the portions proximal and distal to the 20S proteolytic core, respectively. As to expression, ubiquitous with highest expression in flowers.

Its subcellular location is the cytoplasm. The protein resides in the nucleus. In terms of biological role, acts as a regulatory subunit of the 26 proteasome which is involved in the ATP-dependent degradation of ubiquitinated proteins. Required for gametogenesis and sporophyte development. Acts redundantly with RPN5B. The chain is 26S proteasome non-ATPase regulatory subunit 12 homolog A (RPN5A) from Arabidopsis thaliana (Mouse-ear cress).